Consider the following 471-residue polypeptide: Proline--tRNA ligase (471 aa).

It belongs to the class-II aminoacyl-tRNA synthetase family. ProS type 3 subfamily. Homodimer.

It localises to the cytoplasm. It catalyses the reaction tRNA(Pro) + L-proline + ATP = L-prolyl-tRNA(Pro) + AMP + diphosphate. Its function is as follows. Catalyzes the attachment of proline to tRNA(Pro) in a two-step reaction: proline is first activated by ATP to form Pro-AMP and then transferred to the acceptor end of tRNA(Pro). In Archaeoglobus fulgidus (strain ATCC 49558 / DSM 4304 / JCM 9628 / NBRC 100126 / VC-16), this protein is Proline--tRNA ligase.